We begin with the raw amino-acid sequence, 113 residues long: Hydrogenase maturation factor HypA 2 (113 aa).

His2 is a Ni(2+) binding site. Cys73, Cys76, Cys89, and Cys92 together coordinate Zn(2+).

Belongs to the HypA/HybF family.

Its function is as follows. Involved in the maturation of [NiFe] hydrogenases. Required for nickel insertion into the metal center of the hydrogenase. In Bradyrhizobium diazoefficiens (strain JCM 10833 / BCRC 13528 / IAM 13628 / NBRC 14792 / USDA 110), this protein is Hydrogenase maturation factor HypA 2.